The primary structure comprises 120 residues: cAMP-responsive element-binding protein-like 2 (120 aa).

Residues 1–24 form a disordered region; that stretch reads MDDSKVVGGKVKKPGKRGRKPAKI. The span at 10 to 21 shows a compositional bias: basic residues; sequence KVKKPGKRGRKP. Residues 23-86 enclose the bZIP domain; sequence KIDLKAKLER…MAMDQGKIPS (64 aa). The interval 29-60 is basic motif; the sequence is KLERSRQSARECRARKKLRYQYLEELVSSRER. The segment at 62–69 is leucine-zipper; that stretch reads ICALREEL. The disordered stretch occupies residues 93-120; it reads TGEEQNKSQQNSSRHTKAGKTDANSNSW.

The protein belongs to the bZIP family. ATF subfamily. In terms of assembly, interacts with CREB1; regulates CREB1 phosphorylation, stability and transcriptional activity. In terms of processing, phosphorylated by AMPK.

The protein resides in the nucleus. Its function is as follows. Probable regulator of CREB1 transcriptional activity which is involved in adipose cells differentiation. May also play a regulatory role in the cell cycle. Identification in a chromosomal region frequently deleted in various cancers suggests that it might act as a tumor suppressor. This chain is cAMP-responsive element-binding protein-like 2 (CREBL2), found in Homo sapiens (Human).